The following is a 293-amino-acid chain: Indole-3-glycerol phosphate synthase (293 aa).

This sequence belongs to the TrpC family.

It catalyses the reaction 1-(2-carboxyphenylamino)-1-deoxy-D-ribulose 5-phosphate + H(+) = (1S,2R)-1-C-(indol-3-yl)glycerol 3-phosphate + CO2 + H2O. The protein operates within amino-acid biosynthesis; L-tryptophan biosynthesis; L-tryptophan from chorismate: step 4/5. The sequence is that of Indole-3-glycerol phosphate synthase from Rippkaea orientalis (strain PCC 8801 / RF-1) (Cyanothece sp. (strain PCC 8801)).